The sequence spans 153 residues: Cofilin (153 aa).

The region spanning 4–148 (SGATVSQDCI…EYDSILKTVS (145 aa)) is the ADF-H domain.

Belongs to the actin-binding proteins ADF family.

The protein localises to the cytoplasm. Its subcellular location is the cytoskeleton. The protein resides in the nucleus matrix. Functionally, controls reversibly actin polymerization and depolymerization in a pH-sensitive manner. It has the ability to bind G- and F-actin in a 1:1 ratio of cofilin to actin. Binding to F-actin is regulated by tropomyosin. It is the major component of intranuclear and cytoplasmic actin rods. Required for accumulation of actin at the cell division site via depolymerizing actin at the cell ends. In association with myosin II has a role in the assembly of the contractile ring via severing actin filaments. Involved in the maintenance of the contractile ring once formed. In association with profilin and capping protein, has a role in the mitotic reorganization of the actin cytoskeleton. In Gibberella zeae (strain ATCC MYA-4620 / CBS 123657 / FGSC 9075 / NRRL 31084 / PH-1) (Wheat head blight fungus), this protein is Cofilin (COF1).